Here is a 310-residue protein sequence, read N- to C-terminus: GMP synthase [glutamine-hydrolyzing] subunit B (310 aa).

A GMPS ATP-PPase domain is found at 2–185 (FDPKKFIDEA…LGLPDSIVYR (184 aa)). 29–35 (SGGVDSS) serves as a coordination point for ATP.

As to quaternary structure, heterodimer composed of a glutamine amidotransferase subunit (A) and a GMP-binding subunit (B).

The catalysed reaction is XMP + L-glutamine + ATP + H2O = GMP + L-glutamate + AMP + diphosphate + 2 H(+). Its pathway is purine metabolism; GMP biosynthesis; GMP from XMP (L-Gln route): step 1/1. Catalyzes the synthesis of GMP from XMP. The polypeptide is GMP synthase [glutamine-hydrolyzing] subunit B (guaAB) (Methanocaldococcus jannaschii (strain ATCC 43067 / DSM 2661 / JAL-1 / JCM 10045 / NBRC 100440) (Methanococcus jannaschii)).